A 157-amino-acid chain; its full sequence is Trafficking protein particle complex subunit 6b (157 aa).

The protein belongs to the TRAPP small subunits family. BET3 subfamily. Homodimer. Part of a TRAPP complex.

It is found in the golgi apparatus. The protein localises to the cis-Golgi network. Its subcellular location is the endoplasmic reticulum. Its function is as follows. Component of a transport protein particle (TRAPP) complex that may function in specific stages of inter-organelle traffic. Specifically involved in the early development of neural circuitry, likely by controlling the frequency and amplitude of intracellular calcium transients implicated in the regulation of neuron differentiation and survival. The protein is Trafficking protein particle complex subunit 6b of Danio rerio (Zebrafish).